The following is a 131-amino-acid chain: Large ribosomal subunit protein bL12 (131 aa).

Belongs to the bacterial ribosomal protein bL12 family. In terms of assembly, homodimer. Part of the ribosomal stalk of the 50S ribosomal subunit. Forms a multimeric L10(L12)X complex, where L10 forms an elongated spine to which 2 to 4 L12 dimers bind in a sequential fashion. Binds GTP-bound translation factors.

Its function is as follows. Forms part of the ribosomal stalk which helps the ribosome interact with GTP-bound translation factors. Is thus essential for accurate translation. The polypeptide is Large ribosomal subunit protein bL12 (Prochlorococcus marinus (strain MIT 9312)).